We begin with the raw amino-acid sequence, 120 residues long: Large ribosomal subunit protein uL18 (120 aa).

Belongs to the universal ribosomal protein uL18 family. As to quaternary structure, part of the 50S ribosomal subunit; part of the 5S rRNA/L5/L18/L25 subcomplex. Contacts the 5S and 23S rRNAs.

In terms of biological role, this is one of the proteins that bind and probably mediate the attachment of the 5S RNA into the large ribosomal subunit, where it forms part of the central protuberance. The polypeptide is Large ribosomal subunit protein uL18 (Staphylococcus epidermidis (strain ATCC 35984 / DSM 28319 / BCRC 17069 / CCUG 31568 / BM 3577 / RP62A)).